We begin with the raw amino-acid sequence, 306 residues long: Homeobox protein HMX3 (306 aa).

Residues 95–181 (HTPRTEVPDK…DKKPCRKKKT (87 aa)) are disordered. 2 stretches are compositionally biased toward basic and acidic residues: residues 117–143 (GERDSPEPIHPLKAELEAKDSESKSPE) and 153–174 (EEGKKDDSGEDWKKREESPDKK). Positions 178–237 (KKKTRTVFSRSQVFQLESTFDMKRYLSSSERAGLAASLHLTETQVKIWFQNRRNKWKRQL) form a DNA-binding region, homeobox.

Belongs to the HMX homeobox family.

It is found in the nucleus. Functionally, transcription factor involved in specification of neuronal cell types and which is required for inner ear and hypothalamus development. Binds to the 5'-CAAGTG-3' core sequence. May act as a stage-specific inhibitor of anf1 in the anterior neural plate during the development. The sequence is that of Homeobox protein HMX3 (hmx3) from Xenopus tropicalis (Western clawed frog).